The sequence spans 327 residues: Geranylgeranyl transferase type-2 subunit alpha (327 aa).

PFTA repeat units follow at residues 44–78 (YSIE…SLAS), 84–118 (FWDK…HYPT), 123–157 (VWQT…NIES), 163–197 (LDKE…RMFQ), and 207–241 (YIRT…NDIV).

The protein belongs to the protein prenyltransferase subunit alpha family. In terms of assembly, heterodimer of an alpha and a beta subunit.

The catalysed reaction is geranylgeranyl diphosphate + L-cysteinyl-[protein] = S-geranylgeranyl-L-cysteinyl-[protein] + diphosphate. Its function is as follows. Catalyzes the transfer of a geranyl-geranyl moiety from geranyl-geranyl pyrophosphate to proteins having the C-terminal -XCC or -XCXC, where both cysteines may become modified. Acts on YPT1 and SEC4. The sequence is that of Geranylgeranyl transferase type-2 subunit alpha (BET4) from Saccharomyces cerevisiae (strain ATCC 204508 / S288c) (Baker's yeast).